The chain runs to 122 residues: Ribosome-binding factor A (122 aa).

Belongs to the RbfA family. As to quaternary structure, monomer. Binds 30S ribosomal subunits, but not 50S ribosomal subunits or 70S ribosomes.

The protein resides in the cytoplasm. Its function is as follows. One of several proteins that assist in the late maturation steps of the functional core of the 30S ribosomal subunit. Associates with free 30S ribosomal subunits (but not with 30S subunits that are part of 70S ribosomes or polysomes). Required for efficient processing of 16S rRNA. May interact with the 5'-terminal helix region of 16S rRNA. This chain is Ribosome-binding factor A, found in Opitutus terrae (strain DSM 11246 / JCM 15787 / PB90-1).